Reading from the N-terminus, the 804-residue chain is DNA mismatch repair protein MutS (804 aa).

An ATP-binding site is contributed by Gly614 to Ser621.

Belongs to the DNA mismatch repair MutS family.

Its function is as follows. This protein is involved in the repair of mismatches in DNA. It is possible that it carries out the mismatch recognition step. This protein has a weak ATPase activity. The sequence is that of DNA mismatch repair protein MutS from Ehrlichia chaffeensis (strain ATCC CRL-10679 / Arkansas).